Consider the following 116-residue polypeptide: Protein TCL1B1 (116 aa).

The protein belongs to the TCL1 family.

The protein is Protein TCL1B1 (Tcl1b1) of Mus musculus (Mouse).